The primary structure comprises 243 residues: Small ribosomal subunit protein uS2 (243 aa).

This sequence belongs to the universal ribosomal protein uS2 family.

This Pseudoalteromonas atlantica (strain T6c / ATCC BAA-1087) protein is Small ribosomal subunit protein uS2.